Here is a 336-residue protein sequence, read N- to C-terminus: Heat-inducible transcription repressor HrcA (336 aa).

The protein belongs to the HrcA family.

Functionally, negative regulator of class I heat shock genes (grpE-dnaK-dnaJ and groELS operons). Prevents heat-shock induction of these operons. This Variovorax paradoxus (strain S110) protein is Heat-inducible transcription repressor HrcA.